A 222-amino-acid chain; its full sequence is Cyclin-dependent kinase inhibitor 3 (222 aa).

A disordered region spans residues 68-101 (KPSSLIEPKQPPRVHRSGIKESGSRSRVDSVNSV). Over residues 85–95 (GIKESGSRSRV) the composition is skewed to basic and acidic residues.

It belongs to the CDI family. ICK/KRP subfamily. As to quaternary structure, specifically interacts with CDKA-1, but not with CDKB1-1.

The protein resides in the nucleus. It is found in the nucleoplasm. Functionally, binds and inhibits CYCD2-1/CDKA-1 complex kinase activity. May target specifically CDKA-1. In Arabidopsis thaliana (Mouse-ear cress), this protein is Cyclin-dependent kinase inhibitor 3 (KRP3).